The sequence spans 128 residues: Probable 4-amino-4-deoxy-L-arabinose-phosphoundecaprenol flippase subunit ArnF (128 aa).

The Cytoplasmic segment spans residues 1–2 (MG). The chain crosses the membrane as a helical span at residues 3–23 (LIWGLFSVIIASVAQLSLGFA). Topologically, residues 24–35 (ASHLPPMTHLWD) are periplasmic. Residues 36–56 (FIAALLAFGLDARILLLGLLG) form a helical membrane-spanning segment. Topologically, residues 57–75 (YLLSVFCWYKTLHKLALSK) are cytoplasmic. A helical membrane pass occupies residues 76–96 (AYALLSMSYVLVWIASMVLPG). At 97-100 (REGT) the chain is on the periplasmic side. Residues 101–121 (FSLKALLGVACIMSGLMLIFL) traverse the membrane as a helical segment. Topologically, residues 122-128 (PTTKQRY) are cytoplasmic.

It belongs to the ArnF family. In terms of assembly, heterodimer of ArnE and ArnF.

The protein resides in the cell inner membrane. The protein operates within bacterial outer membrane biogenesis; lipopolysaccharide biosynthesis. Functionally, translocates 4-amino-4-deoxy-L-arabinose-phosphoundecaprenol (alpha-L-Ara4N-phosphoundecaprenol) from the cytoplasmic to the periplasmic side of the inner membrane. This is Probable 4-amino-4-deoxy-L-arabinose-phosphoundecaprenol flippase subunit ArnF from Shigella flexneri serotype 5b (strain 8401).